We begin with the raw amino-acid sequence, 315 residues long: Biotin synthase (315 aa).

The Radical SAM core domain occupies 39 to 266 (NSLQFATLLS…KSAIRLTAGR (228 aa)). [4Fe-4S] cluster-binding residues include Cys54, Cys58, and Cys61. Residues Cys98, Cys129, Cys189, and Arg261 each coordinate [2Fe-2S] cluster.

Belongs to the radical SAM superfamily. Biotin synthase family. Homodimer. It depends on [4Fe-4S] cluster as a cofactor. [2Fe-2S] cluster is required as a cofactor.

The enzyme catalyses (4R,5S)-dethiobiotin + (sulfur carrier)-SH + 2 reduced [2Fe-2S]-[ferredoxin] + 2 S-adenosyl-L-methionine = (sulfur carrier)-H + biotin + 2 5'-deoxyadenosine + 2 L-methionine + 2 oxidized [2Fe-2S]-[ferredoxin]. It functions in the pathway cofactor biosynthesis; biotin biosynthesis; biotin from 7,8-diaminononanoate: step 2/2. Functionally, catalyzes the conversion of dethiobiotin (DTB) to biotin by the insertion of a sulfur atom into dethiobiotin via a radical-based mechanism. The chain is Biotin synthase from Legionella pneumophila (strain Paris).